The primary structure comprises 404 residues: Glutamyl-tRNA reductase (404 aa).

Substrate-binding positions include 47–50, Ser-94, 99–101, and Gln-105; these read TCNR and EQE. Cys-48 acts as the Nucleophile in catalysis. An NADP(+)-binding site is contributed by 174 to 179; that stretch reads GAGEMG.

As to quaternary structure, homotetramer.

It catalyses the reaction (S)-4-amino-5-oxopentanoate + tRNA(Glu) + NADP(+) = L-glutamyl-tRNA(Glu) + NADPH + H(+). The protein operates within porphyrin-containing compound metabolism; protoporphyrin-IX biosynthesis; 5-aminolevulinate from L-glutamyl-tRNA(Glu): step 1/2. Its activity is regulated as follows. Inhibited by heavy metal compounds, Zn(2+), and heme. Also competitively inhibited by glutamycin. Catalyzes the NADPH-dependent reduction of glutamyl-tRNA(Glu) to glutamate 1-semialdehyde (GSA). In the absence of NADPH, exhibits substrate esterase activity, leading to the release of glutamate from tRNA. The sequence is that of Glutamyl-tRNA reductase (hemA) from Methanopyrus kandleri (strain AV19 / DSM 6324 / JCM 9639 / NBRC 100938).